The following is a 122-amino-acid chain: Lycotoxin-Pa4a (122 aa).

A signal peptide spans 1–20 (MKLGIFFSVFFLAMIHSCLS). A propeptide spanning residues 21 to 47 (ETNEDKNLESYFREDDLKALSFGEYAR) is cleaved from the precursor. Intrachain disulfides connect C58/C73, C65/C82, C72/C100, and C84/C98.

The protein belongs to the neurotoxin 19 (CSTX) family. In terms of tissue distribution, expressed by the venom gland.

The protein resides in the secreted. It localises to the target cell membrane. Potent antibacterial peptide with anti-inflammatory properties. Inhibits both Gram-negative and Gram-positive bacteria by disrupting both the outer membrane and the cytosolic membrane of bacteria. Also downregulates the expression of pro-inflammatory mediators (cyclooxygenase-2 (PTGS2/COX2), nitric oxide-induced synthase (NOS2), IL-1 beta (IL1B), TNF-alpha (TNF)) and upregulates the level of anti-inflammatory cytokine (IL10) by inactivating mitogen-activated protein kinase signaling in a lipopolysaccharide-stimulated murine macrophage cell line. This is Lycotoxin-Pa4a from Pardosa astrigera (Wolf spider).